The sequence spans 200 residues: Peptidyl-tRNA hydrolase (200 aa).

A tRNA-binding site is contributed by Y15. H20 serves as the catalytic Proton acceptor. TRNA-binding residues include Y66, N68, and N114.

Belongs to the PTH family. As to quaternary structure, monomer.

Its subcellular location is the cytoplasm. The catalysed reaction is an N-acyl-L-alpha-aminoacyl-tRNA + H2O = an N-acyl-L-amino acid + a tRNA + H(+). Its function is as follows. Hydrolyzes ribosome-free peptidyl-tRNAs (with 1 or more amino acids incorporated), which drop off the ribosome during protein synthesis, or as a result of ribosome stalling. In terms of biological role, catalyzes the release of premature peptidyl moieties from peptidyl-tRNA molecules trapped in stalled 50S ribosomal subunits, and thus maintains levels of free tRNAs and 50S ribosomes. The chain is Peptidyl-tRNA hydrolase from Paraburkholderia xenovorans (strain LB400).